Consider the following 606-residue polypeptide: Glutamine--fructose-6-phosphate aminotransferase [isomerizing] (606 aa).

The Nucleophile; for GATase activity role is filled by cysteine 2. The region spanning 2-218 is the Glutamine amidotransferase type-2 domain; it reads CGIFGYLGEK…SGELAVLRIG (217 aa). 2 consecutive SIS domains span residues 278–424 and 448–596; these read FTES…HRQV and LDSS…VDRP. The For Fru-6P isomerization activity role is filled by lysine 601.

In terms of assembly, homodimer.

The protein localises to the cytoplasm. It catalyses the reaction D-fructose 6-phosphate + L-glutamine = D-glucosamine 6-phosphate + L-glutamate. In terms of biological role, catalyzes the first step in hexosamine metabolism, converting fructose-6P into glucosamine-6P using glutamine as a nitrogen source. In Chlamydia trachomatis serovar D (strain ATCC VR-885 / DSM 19411 / UW-3/Cx), this protein is Glutamine--fructose-6-phosphate aminotransferase [isomerizing].